Reading from the N-terminus, the 1478-residue chain is FYVE and coiled-coil domain-containing protein 1 (1478 aa).

Alanine 2 is modified (N-acetylalanine). The stretch at 4–33 (TNAESQLQRIIRDLQDAVTELSKEFQEAGE) forms a coiled coil. Positions 36 to 169 (TDDSTSLHKF…VQFDLASRGF (134 aa)) constitute an RUN domain. Position 196 is a phosphoserine (serine 196). Residues 225–280 (NNEALEGFDEMRLELDQLEVREKQLRERMQQLDRENQELRAAVSQQGEQLQTERER) are a coiled coil. Serine 342 carries the post-translational modification Phosphoserine. The residue at position 381 (threonine 381) is a Phosphothreonine. Coiled coils occupy residues 394-555 (SDAA…MLER) and 596-1151 (QEAQ…KDAL). Residues 586 to 613 (GKPEEEQRGLQEAQLDDTKVQEGSQEEE) form a disordered region. A Phosphoserine modification is found at serine 878. Residues 1173-1231 (DTEANHCLDCKREFSWMVRRHHCRICGRIFCYYCCNNYVLSKHGGKKERCCRACFQKLS) form an FYVE-type zinc finger. The Zn(2+) site is built by cysteine 1179, cysteine 1182, cysteine 1195, cysteine 1198, cysteine 1203, cysteine 1206, cysteine 1223, and cysteine 1226. Positions 1231–1261 (SEGPGSPDSSGSGTSQGEPSPALSPASPGPQ) are enriched in low complexity. Disordered regions lie at residues 1231–1277 (SEGP…PPDD) and 1294–1332 (SGSS…DMPV). 2 stretches are compositionally biased toward polar residues: residues 1294 to 1305 (SGSSLPETPTET) and 1314 to 1324 (EQDTTSTSLTP). The region spanning 1337-1466 (EICLLKSGEL…SKKVFYHLTV (130 aa)) is the GOLD domain.

Can form homodimers. Interacts (via C-terminus) with MAP1LC3B. Interacts with RAB7A; the interaction with RAB7A induces FYCO1 recruitment to late endosomal/lysosomal compartments. Interacts with MAP1LC3B. As to expression, expressed in heart and skeletal muscle.

The protein localises to the cytoplasmic vesicle. The protein resides in the autophagosome. It localises to the endosome. Its subcellular location is the lysosome. Functionally, may mediate microtubule plus end-directed vesicle transport. This Homo sapiens (Human) protein is FYVE and coiled-coil domain-containing protein 1 (FYCO1).